The primary structure comprises 405 residues: Cystathionine gamma-lyase (405 aa).

Residues Arg-62, Tyr-114, and Arg-119 each contribute to the substrate site. The residue at position 212 (Lys-212) is an N6-(pyridoxal phosphate)lysine. Glu-339 provides a ligand contact to substrate.

This sequence belongs to the trans-sulfuration enzymes family. In terms of assembly, homotetramer. Interacts with CALM in a calcium-dependent manner. Requires pyridoxal 5'-phosphate as cofactor.

It is found in the cytoplasm. It catalyses the reaction L,L-cystathionine + H2O = 2-oxobutanoate + L-cysteine + NH4(+). It participates in amino-acid biosynthesis; L-cysteine biosynthesis; L-cysteine from L-homocysteine and L-serine: step 2/2. In terms of biological role, catalyzes the last step in the trans-sulfuration pathway from methionine to cysteine. Has broad substrate specificity. Converts cystathionine to cysteine, ammonia and 2-oxobutanoate. Converts two cysteine molecules to lanthionine and hydrogen sulfide. Can also accept homocysteine as substrate. Specificity depends on the levels of the endogenous substrates. Generates the endogenous signaling molecule hydrogen sulfide (H2S), and so contributes to the regulation of blood pressure. Acts as a cysteine-protein sulfhydrase by mediating sulfhydration of target proteins: sulfhydration consists of converting -SH groups into -SSH on specific cysteine residues of target proteins such as GAPDH, PTPN1 and NF-kappa-B subunit RELA, thereby regulating their function. The sequence is that of Cystathionine gamma-lyase (CTH) from Bos taurus (Bovine).